The following is a 209-amino-acid chain: Thymidylate kinase (209 aa).

10–17 (GLEGAGKS) contacts ATP.

This sequence belongs to the thymidylate kinase family.

The enzyme catalyses dTMP + ATP = dTDP + ADP. Phosphorylation of dTMP to form dTDP in both de novo and salvage pathways of dTTP synthesis. The chain is Thymidylate kinase from Photobacterium profundum (strain SS9).